The following is a 454-amino-acid chain: Probable ECA polymerase (454 aa).

11 helical membrane passes run Leu3–Leu23, Phe39–Phe59, Phe61–Phe81, Leu119–Phe139, Gly154–Leu174, Ala180–Gly200, Gly201–Gly221, Trp222–Leu242, Leu340–Ile360, Tyr377–Ala397, and Val409–Phe429.

This sequence belongs to the WzyE family. Probably part of a complex composed of WzxE, WzyE and WzzE.

It localises to the cell inner membrane. The protein operates within bacterial outer membrane biogenesis; enterobacterial common antigen biosynthesis. Probably involved in the polymerization of enterobacterial common antigen (ECA) trisaccharide repeat units. The protein is Probable ECA polymerase of Yersinia pestis bv. Antiqua (strain Angola).